A 354-amino-acid chain; its full sequence is Protein RecA (354 aa).

An ATP-binding site is contributed by Gly-67 to Thr-74.

Belongs to the RecA family.

It is found in the cytoplasm. Its function is as follows. Can catalyze the hydrolysis of ATP in the presence of single-stranded DNA, the ATP-dependent uptake of single-stranded DNA by duplex DNA, and the ATP-dependent hybridization of homologous single-stranded DNAs. It interacts with LexA causing its activation and leading to its autocatalytic cleavage. This chain is Protein RecA, found in Serratia marcescens.